We begin with the raw amino-acid sequence, 671 residues long: Diguanylate cyclase DgcP (671 aa).

2 disordered regions span residues 204 to 223 and 278 to 298; these read AAPSLPVAEHDEAPGGPPQP and EAGAEPSPAMPADVESAPEAP. Aspartate 549 is a binding site for Mg(2+). Residues asparagine 557, histidine 562, and aspartate 566 each contribute to the substrate site. Glutamate 592 contacts Mg(2+). Residue glutamate 592 is part of the active site.

As to quaternary structure, homodimer. Mg(2+) serves as cofactor.

The protein localises to the cell inner membrane. It carries out the reaction 2 GTP = 3',3'-c-di-GMP + 2 diphosphate. It participates in purine metabolism; 3',5'-cyclic di-GMP biosynthesis. Its function is as follows. Catalyzes the synthesis of cyclic-di-GMP (c-di-GMP) via the condensation of 2 GTP molecules. Cyclic-di-GMP is a second messenger which controls cell surface-associated traits in bacteria. Localizes at the cell poles through interaction with FimV where it increases the local pools of c-di-GMP. The protein is Diguanylate cyclase DgcP (dgcP) of Pseudomonas aeruginosa (strain ATCC 15692 / DSM 22644 / CIP 104116 / JCM 14847 / LMG 12228 / 1C / PRS 101 / PAO1).